The following is a 417-amino-acid chain: Histidine--tRNA ligase (417 aa).

Belongs to the class-II aminoacyl-tRNA synthetase family. As to quaternary structure, homodimer.

Its subcellular location is the cytoplasm. The enzyme catalyses tRNA(His) + L-histidine + ATP = L-histidyl-tRNA(His) + AMP + diphosphate + H(+). This is Histidine--tRNA ligase from Acetivibrio thermocellus (strain ATCC 27405 / DSM 1237 / JCM 9322 / NBRC 103400 / NCIMB 10682 / NRRL B-4536 / VPI 7372) (Clostridium thermocellum).